A 272-amino-acid chain; its full sequence is Shikimate dehydrogenase (NADP(+)) (272 aa).

Residues 14–16 and Thr61 each bind shikimate; that span reads SKS. The active-site Proton acceptor is Lys65. 2 residues coordinate shikimate: Asn86 and Asp102. NADP(+) contacts are provided by residues 126–130, 149–154, Ser189, and Met213; these read GAGGA and NRTFSK. Tyr215 contributes to the shikimate binding site. An NADP(+)-binding site is contributed by Gly238.

The protein belongs to the shikimate dehydrogenase family. As to quaternary structure, homodimer.

The enzyme catalyses shikimate + NADP(+) = 3-dehydroshikimate + NADPH + H(+). It participates in metabolic intermediate biosynthesis; chorismate biosynthesis; chorismate from D-erythrose 4-phosphate and phosphoenolpyruvate: step 4/7. Functionally, involved in the biosynthesis of the chorismate, which leads to the biosynthesis of aromatic amino acids. Catalyzes the reversible NADPH linked reduction of 3-dehydroshikimate (DHSA) to yield shikimate (SA). The polypeptide is Shikimate dehydrogenase (NADP(+)) (Haemophilus influenzae (strain ATCC 51907 / DSM 11121 / KW20 / Rd)).